The primary structure comprises 574 residues: Peptidyl-prolyl cis-trans isomerase FKBP9 (574 aa).

The signal sequence occupies residues 1-26 (MAIRARSWRPPPPPLLLLLLWVTGQA). PPIase FKBP-type domains follow at residues 58–146 (GDFV…MDIW), 170–258 (SDFV…LDLH), 282–369 (GDFL…IDFH), and 393–481 (GDYL…LELV). Asparagine 178, asparagine 290, asparagine 306, and asparagine 401 each carry an N-linked (GlcNAc...) asparagine glycan. EF-hand domains lie at 492-527 (WNGEVSANLFEEIDKDGDGEVLLEEFSEYIHAQVAS) and 537-572 (DAEMIVKNMFTNQDRNGDGKVTAEEFKLKDQETKHD). Ca(2+)-binding residues include aspartate 505, aspartate 507, aspartate 509, glutamate 511, glutamate 516, aspartate 550, asparagine 552, aspartate 554, lysine 556, and glutamate 561. The Prevents secretion from ER signature appears at 571-574 (HDEL).

Post-translationally, phosphorylated.

The protein resides in the endoplasmic reticulum. It carries out the reaction [protein]-peptidylproline (omega=180) = [protein]-peptidylproline (omega=0). Inhibited by FK506. PPIases accelerate the folding of proteins during protein synthesis. The polypeptide is Peptidyl-prolyl cis-trans isomerase FKBP9 (FKBP9) (Bos taurus (Bovine)).